The primary structure comprises 197 residues: Ribonuclease HII (197 aa).

An RNase H type-2 domain is found at His11 to Leu197. The a divalent metal cation site is built by Asp17, Glu18, and Asp109.

It belongs to the RNase HII family. It depends on Mn(2+) as a cofactor. Mg(2+) is required as a cofactor.

The protein resides in the cytoplasm. The catalysed reaction is Endonucleolytic cleavage to 5'-phosphomonoester.. In terms of biological role, endonuclease that specifically degrades the RNA of RNA-DNA hybrids. The sequence is that of Ribonuclease HII from Actinobacillus pleuropneumoniae serotype 7 (strain AP76).